Reading from the N-terminus, the 849-residue chain is Cytosolic phospholipase A2 zeta (849 aa).

A C2 domain is found at 27–145 (EKRGPLWRHW…KCGQPHKHTF (119 aa)). Ca(2+)-binding residues include Asp-60, Asp-66, Asp-116, Asp-118, and Asp-123. A PLA2c domain is found at 306-849 (EMSSGDLDLR…RHQARERAGA (544 aa)). The Nucleophile role is filled by Ser-395. The active-site Proton acceptor is Asp-680.

Ca(2+) is required as a cofactor. In terms of tissue distribution, expressed in myocardium (at protein level).

The protein localises to the cytoplasm. The protein resides in the cytosol. It localises to the cell membrane. It is found in the mitochondrion. It carries out the reaction a 1,2-diacyl-sn-glycero-3-phosphocholine + H2O = a 1-acyl-sn-glycero-3-phosphocholine + a fatty acid + H(+). It catalyses the reaction a 1-O-alkyl-2-acyl-sn-glycero-3-phosphocholine + H2O = a 1-O-alkyl-sn-glycero-3-phosphocholine + a fatty acid + H(+). The catalysed reaction is 1-hexadecanoyl-2-(9Z-octadecenoyl)-sn-glycero-3-phosphocholine + H2O = 2-(9Z-octadecenoyl)-sn-glycero-3-phosphocholine + hexadecanoate + H(+). The enzyme catalyses 1-hexadecanoyl-2-(9Z,12Z-octadecadienoyl)-sn-glycero-3-phosphocholine + H2O = (9Z,12Z)-octadecadienoate + 1-hexadecanoyl-sn-glycero-3-phosphocholine + H(+). It carries out the reaction 1-hexadecanoyl-2-(5Z,8Z,11Z,14Z-eicosatetraenoyl)-sn-glycero-3-phosphocholine + H2O = 1-hexadecanoyl-sn-glycero-3-phosphocholine + (5Z,8Z,11Z,14Z)-eicosatetraenoate + H(+). It catalyses the reaction 1-hexadecanoyl-2-(9Z,12Z-octadecadienoyl)-sn-glycero-3-phosphoethanolamine + H2O = 1-hexadecanoyl-sn-glycero-3-phosphoethanolamine + (9Z,12Z)-octadecadienoate + H(+). The catalysed reaction is 1-hexadecanoyl-2-(5Z,8Z,11Z,14Z-eicosatetraenoyl)-sn-glycero-3-phosphoethanolamine + H2O = 1-hexadecanoyl-sn-glycero-3-phosphoethanolamine + (5Z,8Z,11Z,14Z)-eicosatetraenoate + H(+). The enzyme catalyses 1-(5Z,8Z,11Z,14Z-eicosatetraenoyl)-2-O-hexadecyl-sn-glycero-3-phosphocholine + H2O = 2-O-hexadecyl-sn-glycero-3-phosphocholine + (5Z,8Z,11Z,14Z)-eicosatetraenoate + H(+). It carries out the reaction 1-O-hexadecyl-2-(5Z,8Z,11Z,14Z)-eicosatetraenoyl-sn-glycero-3-phosphocholine + H2O = 1-O-hexadecyl-sn-glycero-3-phosphocholine + (5Z,8Z,11Z,14Z)-eicosatetraenoate + H(+). It catalyses the reaction 1-hexadecanoyl-sn-glycero-3-phosphocholine + H2O = sn-glycerol 3-phosphocholine + hexadecanoate + H(+). With respect to regulation, stimulated by cytosolic Ca(2+). Its function is as follows. Has calcium-dependent phospholipase and lysophospholipase activities with a potential role in membrane lipid remodeling and biosynthesis of lipid mediators. Preferentially hydrolyzes the ester bond of the fatty acyl group attached at sn-2 position of phospholipids (phospholipase A2 activity). Selectively hydrolyzes sn-2 arachidonoyl group from membrane phospholipids, providing the precursor for eicosanoid biosynthesis. In myocardial mitochondria, plays a major role in arachidonate release that is metabolically channeled to the formation of cardioprotective eicosanoids, epoxyeicosatrienoates (EETs). In Homo sapiens (Human), this protein is Cytosolic phospholipase A2 zeta (PLA2G4F).